The primary structure comprises 371 residues: Probable inactive methyltransferase Os04g0175900 (371 aa).

137 to 143 (LDVDEDN) contacts substrate. The substrate binding stretch occupies residues 170–188 (LFEYMGTNHRFNMLFNQAM). 4 residues coordinate S-adenosyl-L-methionine: Gly-216, Asp-239, Met-260, and Lys-273.

This sequence belongs to the class I-like SAM-binding methyltransferase superfamily. Cation-independent O-methyltransferase family. COMT subfamily.

The protein is Probable inactive methyltransferase Os04g0175900 of Oryza sativa subsp. japonica (Rice).